The primary structure comprises 243 residues: Peptidyl-tRNA hydrolase (243 aa).

Tyrosine 14 serves as a coordination point for tRNA. Residue histidine 19 is the Proton acceptor of the active site. TRNA-binding residues include tyrosine 64, asparagine 66, and asparagine 112. Over residues 190–207 the composition is skewed to basic and acidic residues; the sequence is KAEEEKPRKEGKDGEKKP. The disordered stretch occupies residues 190-243; sequence KAEEEKPRKEGKDGEKKPAGQSHIRQARSSNQPKLPATGPMAEMLKKMFGNKGE. Polar residues predominate over residues 212-222; the sequence is HIRQARSSNQP.

The protein belongs to the PTH family. As to quaternary structure, monomer.

The protein localises to the cytoplasm. The enzyme catalyses an N-acyl-L-alpha-aminoacyl-tRNA + H2O = an N-acyl-L-amino acid + a tRNA + H(+). In terms of biological role, hydrolyzes ribosome-free peptidyl-tRNAs (with 1 or more amino acids incorporated), which drop off the ribosome during protein synthesis, or as a result of ribosome stalling. Catalyzes the release of premature peptidyl moieties from peptidyl-tRNA molecules trapped in stalled 50S ribosomal subunits, and thus maintains levels of free tRNAs and 50S ribosomes. This is Peptidyl-tRNA hydrolase from Rhizobium etli (strain CIAT 652).